Consider the following 436-residue polypeptide: Ribulose bisphosphate carboxylase large chain (436 aa).

Positions 104 and 154 each coordinate substrate. The Proton acceptor role is filled by Lys-156. Position 158 (Lys-158) interacts with substrate. Mg(2+)-binding residues include Lys-182, Asp-184, and Glu-185. An N6-carboxylysine modification is found at Lys-182. His-275 acts as the Proton acceptor in catalysis. Positions 276, 308, and 360 each coordinate substrate.

It belongs to the RuBisCO large chain family. Type I subfamily. As to quaternary structure, heterohexadecamer of 8 large chains and 8 small chains; disulfide-linked. The disulfide link is formed within the large subunit homodimers. The cofactor is Mg(2+). The disulfide bond which can form in the large chain dimeric partners within the hexadecamer appears to be associated with oxidative stress and protein turnover.

Its subcellular location is the plastid. It localises to the chloroplast. It catalyses the reaction 2 (2R)-3-phosphoglycerate + 2 H(+) = D-ribulose 1,5-bisphosphate + CO2 + H2O. The catalysed reaction is D-ribulose 1,5-bisphosphate + O2 = 2-phosphoglycolate + (2R)-3-phosphoglycerate + 2 H(+). Functionally, ruBisCO catalyzes two reactions: the carboxylation of D-ribulose 1,5-bisphosphate, the primary event in carbon dioxide fixation, as well as the oxidative fragmentation of the pentose substrate in the photorespiration process. Both reactions occur simultaneously and in competition at the same active site. The polypeptide is Ribulose bisphosphate carboxylase large chain (Euglena anabaena (Euglenaria anabaena)).